A 125-amino-acid polypeptide reads, in one-letter code: Cu-Zn superoxide dismutase-like protein OPG175 (125 aa).

Cys-52 and Cys-102 are oxidised to a cystine.

The protein belongs to the Cu-Zn superoxide dismutase family.

It localises to the virion. The protein resides in the host cytoplasm. Its function is as follows. Superoxide dismutase-like protein with no enzymatic activity. This chain is Cu-Zn superoxide dismutase-like protein OPG175 (OPG175), found in Cowpox virus (strain Brighton Red) (CPV).